The chain runs to 791 residues: Cytochrome c oxidase polypeptide I+III (791 aa).

The interval M1–L473 is COX1. A helical transmembrane segment spans residues L29 to I49. H73 contributes to the Fe(II)-heme a binding site. Helical transmembrane passes span L78–M98, A111–P131, F155–V175, A201–L221, F244–L264, M282–F302, I312–I332, L347–L367, F381–G401, F423–L443, L464–M484, F566–L586, A617–A637, L657–A677, F691–F711, F729–L749, and S771–W791. Positions 250, 254, 299, and 300 each coordinate Cu cation. Residues H250–Y254 constitute a cross-link (1'-histidyl-3'-tyrosine (His-Tyr)). H385 contributes to the heme a3 binding site. H387 serves as a coordination point for Fe(II)-heme a. The interval D545–W791 is COX3.

It in the N-terminal section; belongs to the heme-copper respiratory oxidase family. The protein in the C-terminal section; belongs to the cytochrome c oxidase subunit 3 family. Possibly a heterodimer of A-protein (contains: cytochrome c oxidase subunits I and III) and subunit II. The A-protein could also present a precursor form of subunits I and III. The cofactor is Cu(2+). Heme is required as a cofactor.

The protein localises to the cell membrane. It carries out the reaction 4 Fe(II)-[cytochrome c] + O2 + 8 H(+)(in) = 4 Fe(III)-[cytochrome c] + 2 H2O + 4 H(+)(out). It participates in energy metabolism; oxidative phosphorylation. In terms of biological role, cytochrome c oxidase is the component of the respiratory chain that catalyzes the reduction of oxygen to water. Subunits 1-3 form the functional core of the enzyme complex. Co I is the catalytic subunit of the enzyme. Electrons originating in cytochrome c are transferred via the copper A center of subunit 2 and heme a of subunit 1 to the bimetallic center formed by heme a3 and copper B. This cytochrome c oxidase shows proton pump activity across the membrane in addition to the electron transfer. The protein is Cytochrome c oxidase polypeptide I+III (caaA) of Thermus thermophilus (strain ATCC 27634 / DSM 579 / HB8).